A 224-amino-acid polypeptide reads, in one-letter code: UPF0758 protein CV_3079 (224 aa).

Residues 102 to 224 (ALSSPQQVRD…AESFAERGWL (123 aa)) form the MPN domain. The Zn(2+) site is built by histidine 173, histidine 175, and aspartate 186. The JAMM motif signature appears at 173–186 (HNHPSGVSEPSSAD).

Belongs to the UPF0758 family.

The chain is UPF0758 protein CV_3079 from Chromobacterium violaceum (strain ATCC 12472 / DSM 30191 / JCM 1249 / CCUG 213 / NBRC 12614 / NCIMB 9131 / NCTC 9757 / MK).